Reading from the N-terminus, the 242-residue chain is Proteasome subunit alpha (242 aa).

This sequence belongs to the peptidase T1A family. As to quaternary structure, the 20S proteasome core is composed of 14 alpha and 14 beta subunits that assemble into four stacked heptameric rings, resulting in a barrel-shaped structure. The two inner rings, each composed of seven catalytic beta subunits, are sandwiched by two outer rings, each composed of seven alpha subunits. The catalytic chamber with the active sites is on the inside of the barrel. Has a gated structure, the ends of the cylinder being occluded by the N-termini of the alpha-subunits. Is capped at one or both ends by the proteasome regulatory ATPase, PAN.

The protein localises to the cytoplasm. The formation of the proteasomal ATPase PAN-20S proteasome complex, via the docking of the C-termini of PAN into the intersubunit pockets in the alpha-rings, triggers opening of the gate for substrate entry. Interconversion between the open-gate and close-gate conformations leads to a dynamic regulation of the 20S proteasome proteolysis activity. Component of the proteasome core, a large protease complex with broad specificity involved in protein degradation. In Sulfolobus acidocaldarius (strain ATCC 33909 / DSM 639 / JCM 8929 / NBRC 15157 / NCIMB 11770), this protein is Proteasome subunit alpha.